The following is a 364-amino-acid chain: tRNA-specific 2-thiouridylase MnmA 1 (364 aa).

ATP-binding positions include 11–18 and F37; that span reads GMSGGTDS. The active-site Nucleophile is the C96. A disulfide bond links C96 and C193. G120 lines the ATP pocket. The interval 142-144 is interaction with tRNA; sequence KDQ. C193 acts as the Cysteine persulfide intermediate in catalysis. The interaction with tRNA stretch occupies residues 309–310; that stretch reads RY.

It belongs to the MnmA/TRMU family.

It localises to the cytoplasm. It catalyses the reaction S-sulfanyl-L-cysteinyl-[protein] + uridine(34) in tRNA + AH2 + ATP = 2-thiouridine(34) in tRNA + L-cysteinyl-[protein] + A + AMP + diphosphate + H(+). In terms of biological role, catalyzes the 2-thiolation of uridine at the wobble position (U34) of tRNA, leading to the formation of s(2)U34. This Bacteroides fragilis (strain ATCC 25285 / DSM 2151 / CCUG 4856 / JCM 11019 / LMG 10263 / NCTC 9343 / Onslow / VPI 2553 / EN-2) protein is tRNA-specific 2-thiouridylase MnmA 1.